Reading from the N-terminus, the 54-residue chain is Photoreceptor disk component PRCD (54 aa).

Residue cysteine 2 is the site of S-palmitoyl cysteine attachment. The tract at residues 24–54 is disordered; the sequence is QPEPNGVDGAVSGSSLETDLQSSGREKEPLK. Residues 35 to 46 are compositionally biased toward polar residues; the sequence is SGSSLETDLQSS.

The protein belongs to the PRCD family. Interacts with RHO/rhodopsin; the interaction promotes PRCD stability. In terms of processing, palmitoylated at Cys-2. Palmitoylation is essential for protein stability and trafficking to the photoreceptor outer segment, but does not appear to be essential for membrane localization. Probably palmitoylated by ZDHHC3. Phosphorylated. Expressed in retina (at protein level).

The protein localises to the cell projection. The protein resides in the cilium. It localises to the photoreceptor outer segment. Its subcellular location is the membrane. It is found in the endoplasmic reticulum. The protein localises to the golgi apparatus. Its function is as follows. Involved in vision. The protein is Photoreceptor disk component PRCD of Bos taurus (Bovine).